Consider the following 92-residue polypeptide: Cell division protein FtsB (92 aa).

Topologically, residues 1 to 3 (MRL) are cytoplasmic. The chain crosses the membrane as a helical span at residues 4 to 21 (FVFFMLCLLVLLQYHLWF). Residues 22–92 (GKNGLGDRHN…TFFRIVPKED (71 aa)) are Periplasmic-facing. Residues 28-62 (DRHNLQEEVTLILENNSELRQRNQMMFSEIKDLKE) are a coiled coil.

The protein belongs to the FtsB family. Part of a complex composed of FtsB, FtsL and FtsQ.

Its subcellular location is the cell inner membrane. In terms of biological role, essential cell division protein. May link together the upstream cell division proteins, which are predominantly cytoplasmic, with the downstream cell division proteins, which are predominantly periplasmic. This Psychromonas ingrahamii (strain DSM 17664 / CCUG 51855 / 37) protein is Cell division protein FtsB.